The following is a 284-amino-acid chain: Exosome complex component MTR3 (284 aa).

Belongs to the RNase PH family. In terms of assembly, component of the RNA exosome complex.

It localises to the cytoplasm. It is found in the nucleus. The protein resides in the nucleolus. Its function is as follows. Non-catalytic component of the RNA exosome complex which has 3'-&gt;5' exoribonuclease activity and participates in a multitude of cellular RNA processing and degradation events. This is Exosome complex component MTR3 (MTR3) from Chaetomium thermophilum (strain DSM 1495 / CBS 144.50 / IMI 039719) (Thermochaetoides thermophila).